We begin with the raw amino-acid sequence, 644 residues long: Threonine--tRNA ligase (644 aa).

One can recognise a TGS domain in the interval 3 to 64; that stretch reads EMIRITFPDG…QEDGSISIIT (62 aa). Residues 245-542 form a catalytic region; that stretch reads DHRKLGKELE…LIEEYKGAFP (298 aa). Zn(2+) contacts are provided by C338, H389, and H519.

Belongs to the class-II aminoacyl-tRNA synthetase family. As to quaternary structure, homodimer. It depends on Zn(2+) as a cofactor.

Its subcellular location is the cytoplasm. It catalyses the reaction tRNA(Thr) + L-threonine + ATP = L-threonyl-tRNA(Thr) + AMP + diphosphate + H(+). Catalyzes the attachment of threonine to tRNA(Thr) in a two-step reaction: L-threonine is first activated by ATP to form Thr-AMP and then transferred to the acceptor end of tRNA(Thr). Also edits incorrectly charged L-seryl-tRNA(Thr). The protein is Threonine--tRNA ligase of Geobacillus sp. (strain WCH70).